The following is a 533-amino-acid chain: Lymphocyte cytosolic protein 2 (533 aa).

The region spanning 12–78 (VLAWNSDNLA…SQDINKNEER (67 aa)) is the SAM domain. The residue at position 23 (Y23) is a Phosphotyrosine. Disordered regions lie at residues 78-359 (RRSI…PLAH) and 374-419 (SASL…TPLD). Residues 94–144 (ETESHEEDDGGWSSFEDDYESPNDDDPDGEDDGDYESPNEEEQALVDDAAD) show a composition bias toward acidic residues. Over residues 151-172 (NNEEALQSSILPPNSFHNTNSM) the composition is skewed to polar residues. A compositionally biased stretch (pro residues) spans 186-201 (PPVPPLRPKPALPPLP). A phosphoserine mark is found at S207 and S210. The segment covering 340–354 (NTFPSRSVQPSSKNT) has biased composition (polar residues). A phosphoserine mark is found at S376 and S410. Residues 400–411 (LPVPNRPQPPSP) show a composition bias toward pro residues. The region spanning 422 to 530 (WYVSYITRPE…RYQCTLTHAA (109 aa)) is the SH2 domain.

In terms of assembly, interacts with SLA. Interacts with CBLB. Interacts with GRB2. Interacts with SHB. Interacts with PRAM1. Interacts (via SH2 domain) with CD6 (via tyrosine phosphorylated C-terminus). Interacts with FYB1 and the phosphorylated form of FYB2. Interacts with 14-3-3 adapter/YWHAZ; this phosphorylation leads to YWHAZ proteolytic degradation. Interacts with VAV1; this interaction plays a role in TCR-mediated cytokine production. Interacts with AGER; this interaction plays an important role in AGER-mediated pro-inflammatory responses and cytokine release. Phosphorylated after T-cell receptor activation by ZAP70, ITK and TXK, which leads to the up-regulation of Th1 preferred cytokine IL-2. SYK-dependent phosphorylation is required for recruitment of PI3K signaling components. As to expression, highly expressed in spleen, thymus, and peripheral blood leukocytes.

It localises to the cytoplasm. Functionally, adapter protein primarily involved in signaling pathways within T-cells, as well as other immune cells such as platelets, mast cells, and natural killer (NK) cells. Plays a crucial role for transducing signal from the T-cell receptor (TCR) after antigen recognition leading to T-cell activation. Mechanistically, once phosphorylated by the kinase ZAP70, mediates interactions with the guanine-nucleotide exchange factor VAV1, the adapter protein NCK and the kinase ITK. In turn, stimulates the activation of PKC-theta/PRKCQ and NF-kappa-B transcriptional activity in response to CD3 and CD28 costimulation. Also plays an essential role in AGER-induced signaling pathways including p38 MAPK and ERK1/2 activation leading to cytokine release and pro-inflammatory responses. The protein is Lymphocyte cytosolic protein 2 (Lcp2) of Mus musculus (Mouse).